The sequence spans 269 residues: Tryptophan synthase alpha chain (269 aa).

Catalysis depends on proton acceptor residues E49 and D60.

It belongs to the TrpA family. In terms of assembly, tetramer of two alpha and two beta chains.

The enzyme catalyses (1S,2R)-1-C-(indol-3-yl)glycerol 3-phosphate + L-serine = D-glyceraldehyde 3-phosphate + L-tryptophan + H2O. The protein operates within amino-acid biosynthesis; L-tryptophan biosynthesis; L-tryptophan from chorismate: step 5/5. The alpha subunit is responsible for the aldol cleavage of indoleglycerol phosphate to indole and glyceraldehyde 3-phosphate. The chain is Tryptophan synthase alpha chain from Actinobacillus pleuropneumoniae serotype 7 (strain AP76).